Reading from the N-terminus, the 367-residue chain is MSVAGLKKQFYKASQLVSEKVGGAEGTKLDDDFKEMEKKVDLTSKAVTEVLTRTIEYLQPNPASRAKLTMLNTMSKIRGQVKNPGYPQSEGLLGESMIRYGKELGEDSNFGDALLDAGESMKRLAEVKDSLDIEVKQNFIDPLQNLCDKDLKEIQHHLKKLEGRRLDFDYKKKRQGKIPDEELRQAMEKFEESKEVAETSMHNLLETDIEQVSQLSALVDAQLDYHRQAVQILDELAEKLKRRMREASSRPRREYKPKPRETYDFGESDQSNGGFSCTPTPKVSASSSFRSDKPFRTSVRSIPHLDQPCCKALYDFEPENDGELGFKEGDIITLTNQIDENWYEGMINGQSGFFPLNYVEVLVPLPQ.

The segment at 1–21 (MSVAGLKKQFYKASQLVSEKV) is membrane-binding amphipathic helix. One can recognise a BAR domain in the interval 18–249 (SEKVGGAEGT…LKRRMREASS (232 aa)). Residues 60–87 (PNPASRAKLTMLNTMSKIRGQVKNPGYP) form a required for dimerization upon membrane association region. The stretch at 181–250 (EELRQAMEKF…KRRMREASSR (70 aa)) forms a coiled coil. Positions 218 to 254 (LVDAQLDYHRQAVQILDELAEKLKRRMREASSRPRRE) are interaction with ARC. The tract at residues 243-293 (RMREASSRPRREYKPKPRETYDFGESDQSNGGFSCTPTPKVSASSSFRSDK) is disordered. A compositionally biased stretch (basic and acidic residues) spans 245-263 (REASSRPRREYKPKPRETY). Residues 268–289 (SDQSNGGFSCTPTPKVSASSSF) are compositionally biased toward polar residues. In terms of domain architecture, SH3 spans 305-364 (LDQPCCKALYDFEPENDGELGFKEGDIITLTNQIDENWYEGMINGQSGFFPLNYVEVLVP).

It belongs to the endophilin family. In terms of assembly, interacts with ARC. Interacts with SYNJ1 and DNM1. As to expression, highest level in central region of the theca of developing follicles (at protein level). Expressed at highest level in brain and testis, at high level in kidney, lung and stroma, low level in spleen and adrenal gland (at protein level). Expressed in most tissue with highest levels in small ovarian follicles, brain and testis.

It localises to the cytoplasm. Its subcellular location is the early endosome membrane. The protein localises to the cell projection. It is found in the podosome. In terms of biological role, implicated in endocytosis. May recruit other proteins to membranes with high curvature. This is Endophilin-A2 from Gallus gallus (Chicken).